Here is a 219-residue protein sequence, read N- to C-terminus: Uracil phosphoribosyltransferase 1 (219 aa).

Residues Arg33, Arg42, and 76–79 each bind GTP; that span reads DGRI. Arg86 provides a ligand contact to 5-phospho-alpha-D-ribose 1-diphosphate. GTP is bound at residue Arg103. Arg111 contacts 5-phospho-alpha-D-ribose 1-diphosphate. Arg132 provides a ligand contact to GTP. Residues Asp138 and 138–146 each bind 5-phospho-alpha-D-ribose 1-diphosphate; that span reads DPMLATGGS. Residue Tyr202 participates in D-ribose 5-phosphate binding. Residues Ile203 and 208–210 contribute to the uracil site; that span reads GDF. Asp209 provides a ligand contact to 5-phospho-alpha-D-ribose 1-diphosphate.

Belongs to the UPRTase family. Mg(2+) is required as a cofactor.

It carries out the reaction UMP + diphosphate = 5-phospho-alpha-D-ribose 1-diphosphate + uracil. It participates in pyrimidine metabolism; UMP biosynthesis via salvage pathway; UMP from uracil: step 1/1. With respect to regulation, allosterically activated by GTP. Catalyzes the conversion of uracil and 5-phospho-alpha-D-ribose 1-diphosphate (PRPP) to UMP and diphosphate. This is Uracil phosphoribosyltransferase 1 from Schizosaccharomyces pombe (strain 972 / ATCC 24843) (Fission yeast).